The sequence spans 303 residues: MKNDQIVFEKTKNIAHDINQMQNQQEIIDYLFRQDSLTLNQLKHYYSEPSLPLQFLVKVAVLCMFISMTLASFLFIQAKEVFTNTILSDISPAVFSIFTVICIFMTYTKIIKKGNKNKGKASLNQRSEFYEKNKLINTILYKKYKMDQQNIQANKHTASDNEDSMNFSAVLNHVLTISKNDKELLGYLDTRDNAMLSQLKAYFSTRPFSLPHYMSLMFCGSIIVVYATSLFSGQINYIDIPHIFIFLLLIIFLKILIDLIKLLNISRKGQLHTVLHFAQRAEYLRMRGVIDFILTERYNKKIM.

4 helical membrane passes run 55–77, 92–111, 208–230, and 240–257; these read FLVK…LFIQ, PAVF…TKII, FSLP…ATSL, and IPHI…KILI.

It localises to the cell membrane. This is an uncharacterized protein from Bacillus subtilis (strain 168).